A 132-amino-acid chain; its full sequence is Small ribosomal subunit protein eS6 (132 aa).

The protein belongs to the eukaryotic ribosomal protein eS6 family.

This chain is Small ribosomal subunit protein eS6, found in Methanosphaerula palustris (strain ATCC BAA-1556 / DSM 19958 / E1-9c).